The chain runs to 236 residues: 2,3,4,5-tetrahydropyridine-2,6-dicarboxylate N-acetyltransferase (236 aa).

This sequence belongs to the transferase hexapeptide repeat family. DapH subfamily.

The enzyme catalyses (S)-2,3,4,5-tetrahydrodipicolinate + acetyl-CoA + H2O = L-2-acetamido-6-oxoheptanedioate + CoA. Its pathway is amino-acid biosynthesis; L-lysine biosynthesis via DAP pathway; LL-2,6-diaminopimelate from (S)-tetrahydrodipicolinate (acetylase route): step 1/3. Functionally, catalyzes the transfer of an acetyl group from acetyl-CoA to tetrahydrodipicolinate. This Clostridium perfringens (strain ATCC 13124 / DSM 756 / JCM 1290 / NCIMB 6125 / NCTC 8237 / Type A) protein is 2,3,4,5-tetrahydropyridine-2,6-dicarboxylate N-acetyltransferase.